A 472-amino-acid polypeptide reads, in one-letter code: Diaminopimelate decarboxylase (472 aa).

The interval 1–23 (MNVHTAGPRHAEKTRHTATPQRV) is disordered. Position 97 is an N6-(pyridoxal phosphate)lysine (Lys97). Residues Gly283 and 325-328 (EPGR) each bind pyridoxal 5'-phosphate. The substrate site is built by Arg328, Arg369, and Tyr373. Catalysis depends on Cys400, which acts as the Proton donor. Positions 401 and 430 each coordinate substrate. Tyr430 serves as a coordination point for pyridoxal 5'-phosphate.

Belongs to the Orn/Lys/Arg decarboxylase class-II family. LysA subfamily. Homodimer. It depends on pyridoxal 5'-phosphate as a cofactor.

It carries out the reaction meso-2,6-diaminopimelate + H(+) = L-lysine + CO2. It participates in amino-acid biosynthesis; L-lysine biosynthesis via DAP pathway; L-lysine from DL-2,6-diaminopimelate: step 1/1. Its function is as follows. Specifically catalyzes the decarboxylation of meso-diaminopimelate (meso-DAP) to L-lysine. This Mycobacterium leprae (strain TN) protein is Diaminopimelate decarboxylase.